An 863-amino-acid chain; its full sequence is Disintegrin and metalloproteinase domain-containing protein 15 (863 aa).

The N-terminal stretch at 1 to 17 (MRLALLWALGLLGAGSP) is a signal peptide. The propeptide occupies 18-206 (LPSWPLPNIG…LGQRHIRRRR (189 aa)). Residues 22–45 (PLPNIGGTEEQQAESEKAPREPLE) are disordered. Residues 35–44 (ESEKAPREPL) are compositionally biased toward basic and acidic residues. The short motif at 177–184 (HTCALSWR) is the Cysteine switch element. Cys179 is a binding site for Zn(2+). At 207 to 696 (DVVTETKTVE…QLKATSSLTT (490 aa)) the chain is on the extracellular side. The region spanning 213 to 414 (KTVELVIVAD…GMGSCLFERL (202 aa)) is the Peptidase M12B domain. N-linked (GlcNAc...) asparagine glycosylation occurs at Asn237. Intrachain disulfides connect Cys323–Cys409, Cys365–Cys393, Cys367–Cys376, and Cys480–Cys500. His348 contributes to the Zn(2+) binding site. Residue Glu349 is part of the active site. The Zn(2+) site is built by His352 and His358. Asn389 and Asn392 each carry an N-linked (GlcNAc...) asparagine glycan. The region spanning 421-508 (AAFCGNMFVE…QCPPDVSLGD (88 aa)) is the Disintegrin domain. A Cell attachment site motif is present at residues 484 to 486 (RGD). 2 N-linked (GlcNAc...) asparagine glycosylation sites follow: Asn606 and Asn611. 3 disulfides stabilise this stretch: Cys657/Cys667, Cys661/Cys673, and Cys675/Cys684. The EGF-like domain maps to 657 to 685 (CRSKCHGHGVCDSNRHCYCEEGWAPPDCT). Residues 697–717 (GLLLSLLVLLVLVMLGASYWY) traverse the membrane as a helical segment. Phosphotyrosine; by HCK and LCK occurs at positions 715 and 735. The Cytoplasmic portion of the chain corresponds to 718–863 (RARLHQRLCQ…PPPTVSSLYL (146 aa)). Positions 736 to 863 (RAAQSGPSER…PPPTVSSLYL (128 aa)) are disordered. Pro residues predominate over residues 767 to 778 (PAPPSRPLPPDP). A compositionally biased stretch (basic and acidic residues) spans 779 to 789 (VSKRLQAELAD). Pro residues-rich tracts occupy residues 791–800 (PNPPTRPLPA) and 813–824 (AKPPPPRKPLPA). 2 short sequence motifs (SH3-binding) span residues 815–821 (PPPPRKP) and 850–856 (RPAPPPP).

As to quaternary structure, interacts with ITAGV-ITGB3 (vitronectin receptor). Interacts with SH3GL2 and SNX9; this interaction occurs preferentially with ADAM15 precursor, rather than the processed form, suggesting it occurs in a secretory pathway compartment prior to the medial Golgi. Interacts with ITAG9-ITGB1. Interacts specifically with Src family protein-tyrosine kinases (PTKs). Interacts with SH3PXD2A. Interacts with ITAGV-ITGB1. Interacts with GRB2, HCK, ITSN1, ITSN2, LYN, MAPK1, MAPK3, NCF1, NCK1, nephrocystin, PTK6, SNX33, LCK and SRC. It depends on Zn(2+) as a cofactor. Post-translationally, the precursor is cleaved by a furin endopeptidase. Phosphorylation increases association with PTKs. Expressed in colon and small intestine. Expressed in airway smooth muscle and glomerular mesangial cells (at protein level). Ubiquitously expressed. Overexpressed in atherosclerotic lesions. Constitutively expressed in cultured endothelium and smooth muscle. Expressed in chondrocytes. Expressed in airway smooth muscle and glomerular mesangial cells.

Its subcellular location is the endomembrane system. It localises to the cell junction. The protein resides in the adherens junction. The protein localises to the cell projection. It is found in the cilium. Its subcellular location is the flagellum. It localises to the cytoplasmic vesicle. The protein resides in the secretory vesicle. The protein localises to the acrosome. With respect to regulation, inhibited by hydroxamate-type metalloproteinase inhibitors such as marimastat. Inhibited by metalloproteinase inhibitor 2 (TIMP-2) and TIMP-3 at nanomolar concentrations. Not significantly inhibited by TIMP-1 at concentrations of up to 100 nM. Not activated by PMA or ionomycin. Its function is as follows. Active metalloproteinase with gelatinolytic and collagenolytic activity. Plays a role in the wound healing process. Mediates both heterotypic intraepithelial cell/T-cell interactions and homotypic T-cell aggregation. Inhibits beta-1 integrin-mediated cell adhesion and migration of airway smooth muscle cells. Suppresses cell motility on or towards fibronectin possibly by driving alpha-v/beta-1 integrin (ITAGV-ITGB1) cell surface expression via ERK1/2 inactivation. Cleaves E-cadherin in response to growth factor deprivation. Plays a role in glomerular cell migration. Plays a role in pathological neovascularization. May play a role in cartilage remodeling. May be proteolytically processed, during sperm epididymal maturation and the acrosome reaction. May play a role in sperm-egg binding through its disintegrin domain. This chain is Disintegrin and metalloproteinase domain-containing protein 15 (ADAM15), found in Homo sapiens (Human).